We begin with the raw amino-acid sequence, 157 residues long: Small ribosomal subunit protein uS7 (157 aa).

It belongs to the universal ribosomal protein uS7 family. As to quaternary structure, part of the 30S ribosomal subunit. Contacts proteins S9 and S11.

Functionally, one of the primary rRNA binding proteins, it binds directly to 16S rRNA where it nucleates assembly of the head domain of the 30S subunit. Is located at the subunit interface close to the decoding center, probably blocks exit of the E-site tRNA. The polypeptide is Small ribosomal subunit protein uS7 (Roseiflexus castenholzii (strain DSM 13941 / HLO8)).